The chain runs to 226 residues: Uracil-DNA glycosylase (226 aa).

The active-site Proton acceptor is D64.

The protein belongs to the uracil-DNA glycosylase (UDG) superfamily. UNG family.

The protein localises to the cytoplasm. It catalyses the reaction Hydrolyzes single-stranded DNA or mismatched double-stranded DNA and polynucleotides, releasing free uracil.. In terms of biological role, excises uracil residues from the DNA which can arise as a result of misincorporation of dUMP residues by DNA polymerase or due to deamination of cytosine. This Photorhabdus laumondii subsp. laumondii (strain DSM 15139 / CIP 105565 / TT01) (Photorhabdus luminescens subsp. laumondii) protein is Uracil-DNA glycosylase.